A 145-amino-acid chain; its full sequence is Protein ImpA (145 aa).

Residues S64 and K101 each act as for autocatalytic cleavage activity in the active site.

It belongs to the peptidase S24 family.

In terms of biological role, involved in UV protection and mutation. This chain is Protein ImpA, found in Escherichia coli.